Consider the following 706-residue polypeptide: Ribosomal RNA large subunit methyltransferase K/L (706 aa).

The region spanning 43-154 is the THUMP domain; that stretch reads LLYQSLLWSR…RDMASVALDL (112 aa).

This sequence belongs to the methyltransferase superfamily. RlmKL family.

The protein localises to the cytoplasm. It catalyses the reaction guanosine(2445) in 23S rRNA + S-adenosyl-L-methionine = N(2)-methylguanosine(2445) in 23S rRNA + S-adenosyl-L-homocysteine + H(+). The enzyme catalyses guanosine(2069) in 23S rRNA + S-adenosyl-L-methionine = N(2)-methylguanosine(2069) in 23S rRNA + S-adenosyl-L-homocysteine + H(+). In terms of biological role, specifically methylates the guanine in position 2445 (m2G2445) and the guanine in position 2069 (m7G2069) of 23S rRNA. In Serratia proteamaculans (strain 568), this protein is Ribosomal RNA large subunit methyltransferase K/L.